The primary structure comprises 90 residues: Cell division topological specificity factor (90 aa).

This sequence belongs to the MinE family.

Functionally, prevents the cell division inhibition by proteins MinC and MinD at internal division sites while permitting inhibition at polar sites. This ensures cell division at the proper site by restricting the formation of a division septum at the midpoint of the long axis of the cell. The polypeptide is Cell division topological specificity factor (Clostridium perfringens (strain SM101 / Type A)).